The following is an 89-amino-acid chain: Neuropeptide S (89 aa).

The first 23 residues, 1-23 (MIGSLKFNFILFLLISTMHMFWC), serve as a signal peptide directing secretion. The propeptide occupies 24–67 (HPISSSKVPGKSDYFVILLNSCPTRMDRRVGLDFLKPILEKTLM).

The protein resides in the secreted. Functionally, modulates arousal and anxiety. May play an important anorexigenic role. Binds to its receptor NPSR1 with nanomolar affinity to increase intracellular calcium concentrations. This is Neuropeptide S (NPS) from Bos taurus (Bovine).